Reading from the N-terminus, the 145-residue chain is Transmembrane protein 170A (145 aa).

Residues 1-50 (MIEALIVGEMQDVQIGFVKQILSLNLVPRSNNTTCGNNTSLCDFSEMWYG) lie on the Lumenal side of the membrane. N-linked (GlcNAc...) asparagine glycans are attached at residues N31 and N37. The chain crosses the membrane as a helical span at residues 51 to 71 (VFLWAVVSSLIFHLPAALLAL). Residues 72 to 81 (ATLRRHKVAR) lie on the Cytoplasmic side of the membrane. A helical transmembrane segment spans residues 82 to 102 (FFPLGILLMGIIGPLFGGVLT). At 103–117 (SAAIAGVYKAAGKSM) the chain is on the lumenal side. The helical transmembrane segment at 118-138 (FSLEALVFGVGQSLFIFIISF) threads the bilayer. At 139-145 (LRILATL) the chain is on the cytoplasmic side.

Belongs to the TMEM170 family.

It localises to the endoplasmic reticulum membrane. Its subcellular location is the nucleus envelope. Its function is as follows. May regulate membrane morphogenesis in the endoplasmic reticulum (ER) by promoting ER sheet formation at the expense of ER tubules. In Danio rerio (Zebrafish), this protein is Transmembrane protein 170A (tmem170a).